The sequence spans 378 residues: AA13 family lytic polysaccharide monooxygenase A (378 aa).

A signal peptide spans 1-17 (MKWSVIQALALASGVQA). A Cu(2+)-binding site is contributed by His18. His18 is modified (methylhistidine). Residues 18-244 (HGYLTFPMSR…PQIYLTCADI (227 aa)) form the Chitin-binding type-4 domain. 7 disulfide bridges follow: Cys39–Cys42, Cys65–Cys241, Cys101–Cys199, Cys117–Cys144, Cys152–Cys160, Cys166–Cys172, and Cys180–Cys188. Position 108 (His108) interacts with Cu(2+). A glycan (N-linked (GlcNAc...) asparagine) is linked at Asn221. A Cu(2+)-binding site is contributed by Tyr238. The span at 250–263 (DSQSPPTTTTTSTP) shows a compositional bias: low complexity. A disordered region spans residues 250 to 272 (DSQSPPTTTTTSTPASPPPTSCA). The region spanning 272–378 (ATPAASVAVT…GTATVDTAWK (107 aa)) is the CBM20 domain.

Belongs to the polysaccharide monooxygenase AA13 family. Cu(2+) serves as cofactor. O-mannosylated.

It is found in the secreted. The enzyme catalyses starch + reduced acceptor + O2 = D-glucono-1,5-lactone-terminated malto-oligosaccharides + short-chain malto-oligosaccharides + acceptor + H2O.. With respect to regulation, activity is inhibited by both beta-cyclodextrin or amylose that block the access to the active site. Starch-active lytic polysaccharide monooxygenase that oxidizes the C1 position of starch substrates. Catalysis by LPMOs requires the reduction of the active-site copper from Cu(II) to Cu(I) by a reducing agent and H(2)O(2) or O(2) as a cosubstrate. This chain is AA13 family lytic polysaccharide monooxygenase A, found in Pyricularia oryzae (strain 70-15 / ATCC MYA-4617 / FGSC 8958) (Rice blast fungus).